A 145-amino-acid polypeptide reads, in one-letter code: D-aminoacyl-tRNA deacylase (145 aa).

The short motif at 137–138 (GP) is the Gly-cisPro motif, important for rejection of L-amino acids element.

This sequence belongs to the DTD family. In terms of assembly, homodimer.

The protein localises to the cytoplasm. It carries out the reaction glycyl-tRNA(Ala) + H2O = tRNA(Ala) + glycine + H(+). The enzyme catalyses a D-aminoacyl-tRNA + H2O = a tRNA + a D-alpha-amino acid + H(+). Functionally, an aminoacyl-tRNA editing enzyme that deacylates mischarged D-aminoacyl-tRNAs. Also deacylates mischarged glycyl-tRNA(Ala), protecting cells against glycine mischarging by AlaRS. Acts via tRNA-based rather than protein-based catalysis; rejects L-amino acids rather than detecting D-amino acids in the active site. By recycling D-aminoacyl-tRNA to D-amino acids and free tRNA molecules, this enzyme counteracts the toxicity associated with the formation of D-aminoacyl-tRNA entities in vivo and helps enforce protein L-homochirality. In Colwellia psychrerythraea (strain 34H / ATCC BAA-681) (Vibrio psychroerythus), this protein is D-aminoacyl-tRNA deacylase.